A 227-amino-acid chain; its full sequence is Probable septum site-determining protein MinC (227 aa).

Belongs to the MinC family. As to quaternary structure, interacts with MinD and FtsZ.

Cell division inhibitor that blocks the formation of polar Z ring septums. Rapidly oscillates between the poles of the cell to destabilize FtsZ filaments that have formed before they mature into polar Z rings. Prevents FtsZ polymerization. The protein is Probable septum site-determining protein MinC of Acetivibrio thermocellus (strain ATCC 27405 / DSM 1237 / JCM 9322 / NBRC 103400 / NCIMB 10682 / NRRL B-4536 / VPI 7372) (Clostridium thermocellum).